Consider the following 616-residue polypeptide: Homeodomain-interacting protein kinase 4 (616 aa).

The Protein kinase domain occupies 11 to 347 (YDIIEVLGKG…PSAALRHPFV (337 aa)). ATP is bound by residues 17 to 25 (LGKGTFGEV) and Lys40. Residue Asp136 is the Proton acceptor of the active site. The disordered stretch occupies residues 487 to 616 (HKARKAPAGS…SFLQHVGGHH (130 aa)). The segment covering 497-512 (KSDSNFSNLIRLSQAS) has biased composition (polar residues). A Phosphoserine modification is found at Ser512. A compositionally biased stretch (basic and acidic residues) spans 542–560 (REGDGPGIKDRPMDAERPG).

It belongs to the protein kinase superfamily. CMGC Ser/Thr protein kinase family. HIPK subfamily. Post-translationally, autophosphorylated. In terms of tissue distribution, expressed at moderate levels in lung and white adipose tissues and weakly in brain and liver.

The protein localises to the cytoplasm. The enzyme catalyses L-seryl-[protein] + ATP = O-phospho-L-seryl-[protein] + ADP + H(+). The catalysed reaction is L-threonyl-[protein] + ATP = O-phospho-L-threonyl-[protein] + ADP + H(+). Protein kinase that phosphorylates murine TP53 at Ser-9, and thus induces TP53 repression of BIRC5 promoter. May act as a corepressor of transcription factors (Potential). In Mus musculus (Mouse), this protein is Homeodomain-interacting protein kinase 4 (Hipk4).